We begin with the raw amino-acid sequence, 185 residues long: MLQAIYNETKDLMQKSIQALSRDFSTLRSAKVSVNILDHIKVDYYGTPTALNQVGSVMSLDATTLQISPWEKNLLKEIERSIQEANIGVNPNNDGETIKLFFPPMTTEQRKLIAKDAKAMGEKAKVAVRNTRQDANNKVKKLEKDKEISEDESKKAQEQIQKITDEAIKKIDESVKNKEDAILKV.

Residues Ala-127–Glu-158 are disordered.

This sequence belongs to the RRF family.

It is found in the cytoplasm. In terms of biological role, responsible for the release of ribosomes from messenger RNA at the termination of protein biosynthesis. May increase the efficiency of translation by recycling ribosomes from one round of translation to another. The chain is Ribosome-recycling factor from Helicobacter pylori (strain G27).